We begin with the raw amino-acid sequence, 142 residues long: ATP synthase epsilon chain (142 aa).

The protein belongs to the ATPase epsilon chain family. In terms of assembly, F-type ATPases have 2 components, CF(1) - the catalytic core - and CF(0) - the membrane proton channel. CF(1) has five subunits: alpha(3), beta(3), gamma(1), delta(1), epsilon(1). CF(0) has three main subunits: a, b and c.

Its subcellular location is the cell inner membrane. Its function is as follows. Produces ATP from ADP in the presence of a proton gradient across the membrane. The sequence is that of ATP synthase epsilon chain from Histophilus somni (strain 129Pt) (Haemophilus somnus).